The sequence spans 402 residues: Nicotinate phosphoribosyltransferase (402 aa).

A Phosphohistidine; by autocatalysis modification is found at His221.

This sequence belongs to the NAPRTase family. Transiently phosphorylated on a His residue during the reaction cycle. Phosphorylation strongly increases the affinity for substrates and increases the rate of nicotinate D-ribonucleotide production. Dephosphorylation regenerates the low-affinity form of the enzyme, leading to product release.

The catalysed reaction is nicotinate + 5-phospho-alpha-D-ribose 1-diphosphate + ATP + H2O = nicotinate beta-D-ribonucleotide + ADP + phosphate + diphosphate. It functions in the pathway cofactor biosynthesis; NAD(+) biosynthesis; nicotinate D-ribonucleotide from nicotinate: step 1/1. In terms of biological role, catalyzes the synthesis of beta-nicotinate D-ribonucleotide from nicotinate and 5-phospho-D-ribose 1-phosphate at the expense of ATP. The polypeptide is Nicotinate phosphoribosyltransferase (Sodalis glossinidius (strain morsitans)).